A 25-amino-acid polypeptide reads, in one-letter code: Neuromedin-U-25 (25 aa).

Asn25 is subject to Asparagine amide.

This sequence belongs to the NmU family.

The protein localises to the secreted. Stimulates uterine smooth muscle contraction and causes selective vasoconstriction. In Gallus gallus (Chicken), this protein is Neuromedin-U-25 (NMU).